We begin with the raw amino-acid sequence, 584 residues long: High-affinity choline transporter 1 (584 aa).

Topologically, residues 1-6 (MTVHID) are extracellular. A helical transmembrane segment spans residues 7–27 (GIVAIVLFYLLILFVGLWAAW). The Cytoplasmic segment spans residues 28–50 (KSKNTSMEGAMDRSEAIMIGGRD). A helical membrane pass occupies residues 51-71 (IGLLVGGFTMTATWVGGGYIN). Over 72-83 (GTAEAVYVPGYG) the chain is Extracellular. The helical transmembrane segment at 84–104 (LAWAQAPFGYALSLVIGGLFF) threads the bilayer. The Cytoplasmic segment spans residues 105 to 127 (AKPMRSRGYVTMLDPFQQMYGKR). The chain crosses the membrane as a helical span at residues 128–148 (MGGLLFIPALLGEIFWSAAIL). Over 149 to 166 (SALGATLSVIVDININVS) the chain is Extracellular. Residues 167–187 (VVVSAVIAVLYTLVGGLYSVA) traverse the membrane as a helical segment. The Cytoplasmic segment spans residues 188-193 (YTDVVQ). A helical transmembrane segment spans residues 194-214 (LFCIFLGLWISIPFALLNPAV). The Extracellular segment spans residues 215–239 (TDIIVTANQEVYQEPWVGNIQSKDS). Residues 240–260 (LIWIDNFLLLMLGGIPWQVYF) traverse the membrane as a helical segment. Topologically, residues 261–276 (QRVLSASSATYAQVLS) are cytoplasmic. The chain crosses the membrane as a helical span at residues 277-297 (FLAAFGCVLMAIPSVLIGAIG). The Extracellular segment spans residues 298-319 (TSTDWNQTSYGLPGPIGKNETD). A glycan (N-linked (GlcNAc...) asparagine) is linked at Asn-303. The helical transmembrane segment at 320–340 (MILPIVLQHLCPPYISFFGLG) threads the bilayer. At 341–378 (AVSAAVMSSADSSILSASSMFARNIYHLAFRQEASDKE) the chain is on the cytoplasmic side. A helical membrane pass occupies residues 379 to 399 (IVWVMRITIFLFGGAATSMAL). Over 400–408 (LAQSIYGLW) the chain is Extracellular. Residues 409–429 (YLSSDLVYVIIFPQLISVLFV) traverse the membrane as a helical segment. Residues 430 to 437 (KGTNTYGS) are Cytoplasmic-facing. Residues 438 to 458 (IAGYIIGFLLRISGGEPYLHM) traverse the membrane as a helical segment. At 459–487 (QPFIYYPGCYLDHSFGDDPVYVQRFPFKT) the chain is on the extracellular side. The chain crosses the membrane as a helical span at residues 488–508 (MAMLFSFLGNTGVSYLVKYLF). Residues 509 to 584 (VSGILPPKLD…NPELSKSGND (76 aa)) lie on the Cytoplasmic side of the membrane.

This sequence belongs to the sodium:solute symporter (SSF) (TC 2.A.21) family. In terms of processing, phosphorylated. Specific for cholinergic neurons.

The protein localises to the membrane. Imports choline from the extracellular space to the neuron with high affinity. Rate-limiting step in acetylcholine synthesis. Sodium ion and chloride ion dependent. This chain is High-affinity choline transporter 1 (CHT1), found in Torpedo marmorata (Marbled electric ray).